The primary structure comprises 577 residues: Pentatricopeptide repeat-containing protein At1g06143 (577 aa).

PPR repeat units follow at residues 59–89, 90–124, 125–155, 158–192, 193–219, 220–250, 251–285, 286–320, 321–351, 352–386, 387–417, and 423–453; these read DCRL…MQEP, NVFV…SVSP, SSYT…KFGF, HVKI…DDIA, WTTM…MSEK, NEAT…MPVK, DIIS…GIIP, DEVT…GFVL, DVYI…LPKK, NLFC…SVKP, NAVT…MIDD, and NVEH…MEFE. The type E motif stretch occupies residues 458–534; it reads IWGALLDGCR…CPGTSSIRID (77 aa). Residues 535–565 are type E(+) motif; it reads KRDHLFAAADKSHSASDEVCLLLDEIYDQMG.

It belongs to the PPR family. PCMP-E subfamily.

The sequence is that of Pentatricopeptide repeat-containing protein At1g06143 (EMB1444) from Arabidopsis thaliana (Mouse-ear cress).